Reading from the N-terminus, the 1185-residue chain is DNA-directed RNA polymerase subunit beta' (1185 aa).

4 residues coordinate Zn(2+): Cys60, Cys62, Cys75, and Cys78. Residues Asp449, Asp451, and Asp453 each coordinate Mg(2+). Cys774, Cys853, Cys860, and Cys863 together coordinate Zn(2+).

This sequence belongs to the RNA polymerase beta' chain family. The RNAP catalytic core consists of 2 alpha, 1 beta, 1 beta' and 1 omega subunit. When a sigma factor is associated with the core the holoenzyme is formed, which can initiate transcription. It depends on Mg(2+) as a cofactor. Zn(2+) is required as a cofactor.

It carries out the reaction RNA(n) + a ribonucleoside 5'-triphosphate = RNA(n+1) + diphosphate. Functionally, DNA-dependent RNA polymerase catalyzes the transcription of DNA into RNA using the four ribonucleoside triphosphates as substrates. This chain is DNA-directed RNA polymerase subunit beta', found in Desulforamulus reducens (strain ATCC BAA-1160 / DSM 100696 / MI-1) (Desulfotomaculum reducens).